The primary structure comprises 382 residues: U11/U12 small nuclear ribonucleoprotein 59 kDa protein (382 aa).

A coiled-coil region spans residues 31-63; sequence NTKNITDQLKQLQDTLNLAKSMEKELEALKMIK. The interval 274-297 is disordered; the sequence is SEENTTLTTSNKTNNDTDKDSNTN. A compositionally biased stretch (low complexity) spans 277–287; sequence NTTLTTSNKTN.

As to quaternary structure, component of the U11/U12 snRNPs that are part of the U12-type spliceosome.

The protein resides in the nucleus. In Arabidopsis thaliana (Mouse-ear cress), this protein is U11/U12 small nuclear ribonucleoprotein 59 kDa protein (SNRNP59).